The chain runs to 353 residues: ATP-dependent kinase YFH7 (353 aa).

Glycine 31–threonine 39 lines the ATP pocket.

Belongs to the YFH7 family.

Its function is as follows. ATP-dependent kinase that could be involved in endoplasmic reticulum membrane assembly. The chain is ATP-dependent kinase YFH7 (YFH7) from Saccharomyces cerevisiae (strain JAY291) (Baker's yeast).